The primary structure comprises 399 residues: Subtilisin-like protease 1 (399 aa).

Positions 1-19 (MGVFRFISISLAAVSAANA) are cleaved as a signal peptide. Positions 20–116 (AQILSMPHAQ…VEPDTIISVH (97 aa)) are excised as a propeptide. The 82-residue stretch at 34 to 115 (SYIVMMKDDT…FVEPDTIISV (82 aa)) folds into the Inhibitor I9 domain. The region spanning 126-399 (SWGLARISNP…TNVLINNGGA (274 aa)) is the Peptidase S8 domain. Residues aspartate 158 and histidine 190 each act as charge relay system in the active site. A disordered region spans residues 175-198 (GSNQVNDGDDRDGSGHGTHTSGTM). N-linked (GlcNAc...) asparagine glycosylation is present at asparagine 251. Positions 282–294 (NDNQDAQSSSPAS) are enriched in polar residues. The disordered stretch occupies residues 282-312 (NDNQDAQSSSPASEPSVCTVGSSAEDDSRSS). Serine 345 functions as the Charge relay system in the catalytic mechanism.

Belongs to the peptidase S8 family.

It localises to the secreted. Secreted subtilisin-like serine protease with keratinolytic activity that contributes to pathogenicity. The sequence is that of Subtilisin-like protease 1 (SUB1) from Arthroderma benhamiae (Trichophyton mentagrophytes).